Here is a 76-residue protein sequence, read N- to C-terminus: cAMP-dependent protein kinase inhibitor alpha (76 aa).

N-acetylthreonine is present on Thr-2. The segment at 49–76 (KTEGEEDAQRNSTEQSGEAQGEAAKSES) is disordered.

The protein belongs to the PKI family.

Its function is as follows. Extremely potent competitive inhibitor of cAMP-dependent protein kinase activity, this protein interacts with the catalytic subunit of the enzyme after the cAMP-induced dissociation of its regulatory chains. The protein is cAMP-dependent protein kinase inhibitor alpha (PKIA) of Bos taurus (Bovine).